Reading from the N-terminus, the 202-residue chain is Imidazole glycerol phosphate synthase subunit HisH (202 aa).

In terms of domain architecture, Glutamine amidotransferase type-1 spans 3-202 (RIVIIDYGLG…KILRNFVEMC (200 aa)). The active-site Nucleophile is Cys-79. Residues His-183 and Glu-185 contribute to the active site.

As to quaternary structure, heterodimer of HisH and HisF.

The protein resides in the cytoplasm. It carries out the reaction 5-[(5-phospho-1-deoxy-D-ribulos-1-ylimino)methylamino]-1-(5-phospho-beta-D-ribosyl)imidazole-4-carboxamide + L-glutamine = D-erythro-1-(imidazol-4-yl)glycerol 3-phosphate + 5-amino-1-(5-phospho-beta-D-ribosyl)imidazole-4-carboxamide + L-glutamate + H(+). It catalyses the reaction L-glutamine + H2O = L-glutamate + NH4(+). The protein operates within amino-acid biosynthesis; L-histidine biosynthesis; L-histidine from 5-phospho-alpha-D-ribose 1-diphosphate: step 5/9. In terms of biological role, IGPS catalyzes the conversion of PRFAR and glutamine to IGP, AICAR and glutamate. The HisH subunit catalyzes the hydrolysis of glutamine to glutamate and ammonia as part of the synthesis of IGP and AICAR. The resulting ammonia molecule is channeled to the active site of HisF. This chain is Imidazole glycerol phosphate synthase subunit HisH, found in Methanosarcina mazei (strain ATCC BAA-159 / DSM 3647 / Goe1 / Go1 / JCM 11833 / OCM 88) (Methanosarcina frisia).